Here is a 334-residue protein sequence, read N- to C-terminus: Cytoskeleton protein RodZ (334 aa).

The Cytoplasmic segment spans residues 1–111 (MNTEATHDQN…LGKRRKKRDG (111 aa)). The HTH cro/C1-type domain maps to 19-71 (LRNAREQLGLSQQAVAERLCLKVSTVRDIEEDKAPSDLASTFLRGYIRSYARL). Residues 30–49 (QQAVAERLCLKVSTVRDIEE) constitute a DNA-binding region (H-T-H motif). Residues 112 to 132 (WLMSFTWLVLFVVVGLTGAWW) form a helical; Signal-anchor for type II membrane protein membrane-spanning segment. Residues 133 to 334 (WQNHKAQQEE…TLNAEPTPAQ (202 aa)) lie on the Periplasmic side of the membrane. The segment at 155-241 (NADKDSGQSV…PSALPTSQAG (87 aa)) is disordered. The segment covering 161–175 (GQSVPLDTGAVTSQD) has biased composition (polar residues). Composition is skewed to low complexity over residues 176–211 (TTPA…TVVA) and 219–241 (TAAT…SQAG).

It belongs to the RodZ family.

Its subcellular location is the cell inner membrane. Cytoskeletal protein that is involved in cell-shape control through regulation of the length of the long axis. The chain is Cytoskeleton protein RodZ from Salmonella dublin (strain CT_02021853).